A 373-amino-acid polypeptide reads, in one-letter code: ATP phosphoribosyltransferase regulatory subunit (373 aa).

This sequence belongs to the class-II aminoacyl-tRNA synthetase family. HisZ subfamily. Heteromultimer composed of HisG and HisZ subunits.

Its subcellular location is the cytoplasm. It participates in amino-acid biosynthesis; L-histidine biosynthesis; L-histidine from 5-phospho-alpha-D-ribose 1-diphosphate: step 1/9. Functionally, required for the first step of histidine biosynthesis. May allow the feedback regulation of ATP phosphoribosyltransferase activity by histidine. This is ATP phosphoribosyltransferase regulatory subunit from Rhizobium etli (strain ATCC 51251 / DSM 11541 / JCM 21823 / NBRC 15573 / CFN 42).